Reading from the N-terminus, the 87-residue chain is Non-structural protein NS3 (87 aa).

It is found in the host nucleus. Its function is as follows. Plays a role in viral DNA replication. The sequence is that of Non-structural protein NS3 from Mustela (ADV).